The chain runs to 911 residues: Valine--tRNA ligase (911 aa).

The short motif at 57-67 (PTVSGSLHVGH) is the 'HIGH' region element. Residues 599–603 (KMSKS) carry the 'KMSKS' region motif. ATP is bound at residue Lys602. The segment at 882 to 911 (EESAAEDAPETEVAVEASELGEPPVKKPKH) is disordered.

This sequence belongs to the class-I aminoacyl-tRNA synthetase family. ValS type 2 subfamily. Monomer.

It is found in the cytoplasm. It carries out the reaction tRNA(Val) + L-valine + ATP = L-valyl-tRNA(Val) + AMP + diphosphate. Functionally, catalyzes the attachment of valine to tRNA(Val). As ValRS can inadvertently accommodate and process structurally similar amino acids such as threonine, to avoid such errors, it has a 'posttransfer' editing activity that hydrolyzes mischarged Thr-tRNA(Val) in a tRNA-dependent manner. The sequence is that of Valine--tRNA ligase from Bifidobacterium longum subsp. infantis (strain ATCC 15697 / DSM 20088 / JCM 1222 / NCTC 11817 / S12).